Reading from the N-terminus, the 268-residue chain is Tryptophan synthase alpha chain (268 aa).

Residues glutamate 49 and aspartate 60 each act as proton acceptor in the active site.

The protein belongs to the TrpA family. Tetramer of two alpha and two beta chains.

The catalysed reaction is (1S,2R)-1-C-(indol-3-yl)glycerol 3-phosphate + L-serine = D-glyceraldehyde 3-phosphate + L-tryptophan + H2O. The protein operates within amino-acid biosynthesis; L-tryptophan biosynthesis; L-tryptophan from chorismate: step 5/5. In terms of biological role, the alpha subunit is responsible for the aldol cleavage of indoleglycerol phosphate to indole and glyceraldehyde 3-phosphate. This is Tryptophan synthase alpha chain from Salmonella agona (strain SL483).